A 30-amino-acid chain; its full sequence is GIPCGESCVWIPCLTSAVGCSCKSKVCYRN.

The segment at residues 1–30 (GIPCGESCVWIPCLTSAVGCSCKSKVCYRN) is a cross-link (cyclopeptide (Gly-Asn)). Intrachain disulfides connect cysteine 4–cysteine 20, cysteine 8–cysteine 22, and cysteine 13–cysteine 27.

Post-translationally, this is a cyclic peptide.

Its function is as follows. Probably participates in a plant defense mechanism. This Viola odorata (Sweet violet) protein is Cycloviolacin-O9.